Reading from the N-terminus, the 336-residue chain is Calcium-gated potassium channel MthK (336 aa).

The Cytoplasmic portion of the chain corresponds to 1-20; it reads MVLVIEIIRKHLPRVLKVPA. The helical transmembrane segment at 21–41 threads the bilayer; the sequence is TRILLLVLAVIIYGTAGFHFI. At 42 to 48 the chain is on the extracellular side; the sequence is EGESWTV. The helical; Pore-forming intramembrane region spans 49–58; that stretch reads SLYWTFVTIA. The segment at residues 59 to 64 is an intramembrane region (pore-forming); that stretch reads TVGYGD. The Selectivity filter signature appears at 59 to 64; the sequence is TVGYGD. Topologically, residues 65-69 are extracellular; that stretch reads YSPST. A helical membrane pass occupies residues 70-95; sequence PLGMYFTVTLIVLGIGTFAVAVERLL. The Cytoplasmic portion of the chain corresponds to 96–106; it reads EFLINREQMKL. The region spanning 115 to 230 is the RCK N-terminal domain; the sequence is SRHVVICGWS…RMAGADQVIS (116 aa). 3 residues coordinate Ca(2+): D184, E210, and E212. The 85-residue stretch at 252 to 336 folds into the RCK C-terminal domain; it reads VQDVLAEEST…IERLKNYISA (85 aa).

In terms of assembly, homotetramer.

The protein resides in the cell membrane. Its function is as follows. Calcium-gated potassium channel. The sequence is that of Calcium-gated potassium channel MthK (mthK) from Methanothermobacter thermautotrophicus (strain ATCC 29096 / DSM 1053 / JCM 10044 / NBRC 100330 / Delta H) (Methanobacterium thermoautotrophicum).